We begin with the raw amino-acid sequence, 272 residues long: Expansin-B16 (272 aa).

Residues 1-25 (MAAFSSSSSAPMLIRSVLFVSLLSA) form the signal peptide. The Expansin-like EG45 domain maps to 63–173 (GGACGYGTLV…RRTACKYGGK (111 aa)). 3 cysteine pairs are disulfide-bonded: Cys66-Cys95, Cys98-Cys168, and Cys103-Cys109. One can recognise an Expansin-like CBD domain in the interval 186–267 (FWLSLLVEFE…NWTPKATYTS (82 aa)).

This sequence belongs to the expansin family. Expansin B subfamily.

The protein localises to the secreted. The protein resides in the cell wall. It is found in the membrane. Functionally, may cause loosening and extension of plant cell walls by disrupting non-covalent bonding between cellulose microfibrils and matrix glucans. No enzymatic activity has been found. May be required for rapid internodal elongation in deepwater rice during submergence. This Oryza sativa subsp. japonica (Rice) protein is Expansin-B16 (EXPB16).